A 78-amino-acid polypeptide reads, in one-letter code: Colicin-V immunity protein (78 aa).

Functionally, this protein is able to protect a cell, which harbors the plasmid ColV encoding colicin V, against colicin V. This is Colicin-V immunity protein (cvi) from Escherichia coli.